Consider the following 422-residue polypeptide: S-adenosylmethionine synthase (422 aa).

Residue His-15 participates in ATP binding. Residue Asp-17 coordinates Mg(2+). Glu-43 lines the K(+) pocket. Glu-56 and Gln-99 together coordinate L-methionine. Residues 99-109 form a flexible loop region; that stretch reads QSPDISRGVTE. Residues 166–168, 232–233, Asp-241, 247–248, Ala-264, and Lys-268 contribute to the ATP site; these read DGK, RF, and RK. Asp-241 provides a ligand contact to L-methionine. Lys-272 contacts L-methionine. Residues 390-422 form a disordered region; it reads AVPATTNGAGSKNGSGSKKEPKRKGKKETGAQA.

This sequence belongs to the AdoMet synthase family. As to quaternary structure, homotetramer; dimer of dimers. Mg(2+) serves as cofactor. It depends on K(+) as a cofactor.

Its subcellular location is the cytoplasm. It catalyses the reaction L-methionine + ATP + H2O = S-adenosyl-L-methionine + phosphate + diphosphate. Its pathway is amino-acid biosynthesis; S-adenosyl-L-methionine biosynthesis; S-adenosyl-L-methionine from L-methionine: step 1/1. Catalyzes the formation of S-adenosylmethionine (AdoMet) from methionine and ATP. The overall synthetic reaction is composed of two sequential steps, AdoMet formation and the subsequent tripolyphosphate hydrolysis which occurs prior to release of AdoMet from the enzyme. This chain is S-adenosylmethionine synthase, found in Sorangium cellulosum (strain So ce56) (Polyangium cellulosum (strain So ce56)).